The sequence spans 471 residues: Chromosomal replication initiator protein DnaA (471 aa).

The tract at residues 1-91 (MVDVSETTER…KYWQDESDAV (91 aa)) is domain I, interacts with DnaA modulators. The interval 91–133 (VYSVDICVSDGVGVQPQMAEHPDGAVDGPPVVMVGGTYDHLSS) is domain II. Residues 134–352 (PLDPRFTFDN…GALNKVVAHS (219 aa)) are domain III, AAA+ region. Residues Gly-180, Gly-182, Lys-183, and Thr-184 each coordinate ATP. The interval 353–471 (SLVGRSVTIE…DINLLIRMLR (119 aa)) is domain IV, binds dsDNA.

The protein belongs to the DnaA family. As to quaternary structure, oligomerizes as a right-handed, spiral filament on DNA at oriC.

It localises to the cytoplasm. Its function is as follows. Plays an essential role in the initiation and regulation of chromosomal replication. ATP-DnaA binds to the origin of replication (oriC) to initiate formation of the DNA replication initiation complex once per cell cycle. Binds the DnaA box (a 9 base pair repeat at the origin) and separates the double-stranded (ds)DNA. Forms a right-handed helical filament on oriC DNA; dsDNA binds to the exterior of the filament while single-stranded (ss)DNA is stabiized in the filament's interior. The ATP-DnaA-oriC complex binds and stabilizes one strand of the AT-rich DNA unwinding element (DUE), permitting loading of DNA polymerase. After initiation quickly degrades to an ADP-DnaA complex that is not apt for DNA replication. Binds acidic phospholipids. This is Chromosomal replication initiator protein DnaA from Anaplasma marginale (strain St. Maries).